The primary structure comprises 234 residues: Leucyl/phenylalanyl-tRNA--protein transferase (234 aa).

The protein belongs to the L/F-transferase family.

The protein resides in the cytoplasm. It catalyses the reaction N-terminal L-lysyl-[protein] + L-leucyl-tRNA(Leu) = N-terminal L-leucyl-L-lysyl-[protein] + tRNA(Leu) + H(+). The enzyme catalyses N-terminal L-arginyl-[protein] + L-leucyl-tRNA(Leu) = N-terminal L-leucyl-L-arginyl-[protein] + tRNA(Leu) + H(+). It carries out the reaction L-phenylalanyl-tRNA(Phe) + an N-terminal L-alpha-aminoacyl-[protein] = an N-terminal L-phenylalanyl-L-alpha-aminoacyl-[protein] + tRNA(Phe). Functionally, functions in the N-end rule pathway of protein degradation where it conjugates Leu, Phe and, less efficiently, Met from aminoacyl-tRNAs to the N-termini of proteins containing an N-terminal arginine or lysine. The chain is Leucyl/phenylalanyl-tRNA--protein transferase from Escherichia coli O45:K1 (strain S88 / ExPEC).